A 551-amino-acid polypeptide reads, in one-letter code: Probable 4-coumarate--CoA ligase 1 (551 aa).

ATP-binding residues include S205, S206, G207, T208, T209, and K213. A (E)-4-coumaroyl-AMP-binding site is contributed by Y253. K274 contacts CoA. The segment at E276–Q346 is SBD1. A323, Q346, G347, and T351 together coordinate (E)-4-coumaroyl-AMP. 5 residues coordinate ATP: Q346, G347, T351, D430, and R445. Residues G347–Y409 are SBD2. Positions 447 and 451 each coordinate (E)-4-coumaroyl-AMP. Residues K453 and G454 each coordinate CoA. Position 537 (K537) interacts with ATP.

Belongs to the ATP-dependent AMP-binding enzyme family. It depends on Mg(2+) as a cofactor.

The enzyme catalyses (E)-4-coumarate + ATP + CoA = (E)-4-coumaroyl-CoA + AMP + diphosphate. It catalyses the reaction (E)-4-coumarate + ATP + H(+) = (E)-4-coumaroyl-AMP + diphosphate. It carries out the reaction (E)-4-coumaroyl-AMP + CoA = (E)-4-coumaroyl-CoA + AMP + H(+). It participates in phytoalexin biosynthesis; 3,4',5-trihydroxystilbene biosynthesis; 3,4',5-trihydroxystilbene from trans-4-coumarate: step 1/2. In terms of biological role, carboxylate--CoA ligase that may use 4-coumarate as substrate. Follows a two-step reaction mechanism, wherein the carboxylate substrate first undergoes adenylation by ATP, followed by a thioesterification in the presence of CoA to yield the final CoA thioester. In Dictyostelium discoideum (Social amoeba), this protein is Probable 4-coumarate--CoA ligase 1 (4cl1).